The chain runs to 1170 residues: Type I restriction enzyme EcoKI endonuclease subunit (1170 aa).

Residues 143 to 229 adopt a coiled-coil conformation; the sequence is YHQEVLTLKQ…QERKAYHKEI (87 aa). The H-T-H motif DNA-binding region spans 431–450; that stretch reads NQWFADNPGMSELGLRYYQE. Positions 458–639 constitute a Helicase ATP-binding domain; sequence KAIVKGQQEI…GEPVYRYTYR (182 aa). An ATP-binding site is contributed by 472–478; the sequence is ATGTGKT. Residues 574 to 577 carry the DEAH box motif; it reads DEAH. The Helicase C-terminal domain maps to 714–879; that stretch reads ELTNYLDPTG…TLVNEITDSE (166 aa).

The protein belongs to the HsdR family. In terms of assembly, the type I restriction/modification system is composed of three polypeptides R, M and S. The restriction enzyme has stoichiometry R(2)M(2)S(1). The methyltransferase is composed of M(2)S(1). As to quaternary structure, (Microbial infection) Interacts with Escherichia phage T7 protein Ocr; this interaction leads to the inhibition of the type I bifunctional endonuclease and methyltransferase restriction enzyme R.EcoKI composed of R(2)M(2)S(1). Upon purification after overexpression about one-third has the initiating methionine removed.

The catalysed reaction is Endonucleolytic cleavage of DNA to give random double-stranded fragments with terminal 5'-phosphates, ATP is simultaneously hydrolyzed.. The subtype A restriction (R) subunit of a type I restriction enzyme that recognizes 5'-AACN(6)GTGC-3' and cleaves a random distance away. The R subunit is required for both endonuclease and ATPase activities but not for modification. Has endonucleolytic activity that requires Mg(2+), ATP and S-adenosyl-L-methionine (SAM); ATP can be replaced by dATP, no tested molecule could substitute for SAM. Generates double-stranded DNA with no nicks, by cutting one strand then the other within a few seconds. Cleaves only non-methylated DNA, hemi-methylated and fully methylated DNA are not substrates. After locating a non-methylated recognition site, the enzyme complex serves as a molecular motor that translocates DNA in an ATP-dependent manner until a collision occurs that triggers cleavage. This Escherichia coli (strain K12) protein is Type I restriction enzyme EcoKI endonuclease subunit.